The primary structure comprises 320 residues: Biotin synthase (320 aa).

The region spanning 43 to 270 (GAVQKSQLLS…KSWVRLSAGR (228 aa)) is the Radical SAM core domain. The [4Fe-4S] cluster site is built by C58, C62, and C65. The [2Fe-2S] cluster site is built by C102, C133, C193, and R265.

Belongs to the radical SAM superfamily. Biotin synthase family. Homodimer. [4Fe-4S] cluster is required as a cofactor. Requires [2Fe-2S] cluster as cofactor.

The enzyme catalyses (4R,5S)-dethiobiotin + (sulfur carrier)-SH + 2 reduced [2Fe-2S]-[ferredoxin] + 2 S-adenosyl-L-methionine = (sulfur carrier)-H + biotin + 2 5'-deoxyadenosine + 2 L-methionine + 2 oxidized [2Fe-2S]-[ferredoxin]. The protein operates within cofactor biosynthesis; biotin biosynthesis; biotin from 7,8-diaminononanoate: step 2/2. In terms of biological role, catalyzes the conversion of dethiobiotin (DTB) to biotin by the insertion of a sulfur atom into dethiobiotin via a radical-based mechanism. This is Biotin synthase from Hyphomonas neptunium (strain ATCC 15444).